Consider the following 143-residue polypeptide: Large ribosomal subunit protein uL11 (143 aa).

Belongs to the universal ribosomal protein uL11 family. Part of the ribosomal stalk of the 50S ribosomal subunit. Interacts with L10 and the large rRNA to form the base of the stalk. L10 forms an elongated spine to which L12 dimers bind in a sequential fashion forming a multimeric L10(L12)X complex. Post-translationally, one or more lysine residues are methylated.

Functionally, forms part of the ribosomal stalk which helps the ribosome interact with GTP-bound translation factors. The polypeptide is Large ribosomal subunit protein uL11 (Azotobacter vinelandii (strain DJ / ATCC BAA-1303)).